A 188-amino-acid polypeptide reads, in one-letter code: CMT1A duplicated region transcript 15 protein (188 aa).

As to expression, expressed in fetal heart, kidney, liver, lung and spleen.

The protein is CMT1A duplicated region transcript 15 protein (CDRT15) of Homo sapiens (Human).